The primary structure comprises 596 residues: Proline--tRNA ligase (596 aa).

This sequence belongs to the class-II aminoacyl-tRNA synthetase family. ProS type 1 subfamily. As to quaternary structure, homodimer.

It localises to the cytoplasm. It carries out the reaction tRNA(Pro) + L-proline + ATP = L-prolyl-tRNA(Pro) + AMP + diphosphate. Its function is as follows. Catalyzes the attachment of proline to tRNA(Pro) in a two-step reaction: proline is first activated by ATP to form Pro-AMP and then transferred to the acceptor end of tRNA(Pro). As ProRS can inadvertently accommodate and process non-cognate amino acids such as alanine and cysteine, to avoid such errors it has two additional distinct editing activities against alanine. One activity is designated as 'pretransfer' editing and involves the tRNA(Pro)-independent hydrolysis of activated Ala-AMP. The other activity is designated 'posttransfer' editing and involves deacylation of mischarged Ala-tRNA(Pro). The misacylated Cys-tRNA(Pro) is not edited by ProRS. This is Proline--tRNA ligase from Prochlorococcus marinus (strain NATL1A).